A 560-amino-acid chain; its full sequence is Beta-hexosaminidase subunit B1 (560 aa).

Residues 1–25 (MIILKRNIVFLLIIIIVLGIFIATS) form the signal peptide. N-linked (GlcNAc...) asparagine glycans are attached at residues Asn-59, Asn-69, Asn-81, Asn-99, Asn-161, Asn-293, and Asn-346. Glu-359 serves as the catalytic Proton donor. N-linked (GlcNAc...) asparagine glycans are attached at residues Asn-366, Asn-436, Asn-472, and Asn-547.

Belongs to the glycosyl hydrolase 20 family.

The protein resides in the lysosome. The enzyme catalyses Hydrolysis of terminal non-reducing N-acetyl-D-hexosamine residues in N-acetyl-beta-D-hexosaminides.. Responsible for the degradation of GM2 gangliosides, and a variety of other molecules containing terminal N-acetyl hexosamines. This is Beta-hexosaminidase subunit B1 (hexb1) from Dictyostelium discoideum (Social amoeba).